Consider the following 669-residue polypeptide: L-type lectin-domain containing receptor kinase V.9 (669 aa).

An N-terminal signal peptide occupies residues 1-21 (MKFFVLVLLLVLQFFSNKALS). Residues 22-286 (QSEEGEFGFN…RDSRSTSVKK (265 aa)) lie on the Extracellular side of the membrane. Residues 38-259 (SGIAITNSKG…SHYILGWTFK (222 aa)) form a legume-lectin like region. Residues asparagine 53, asparagine 75, asparagine 124, asparagine 206, and asparagine 261 are each glycosylated (N-linked (GlcNAc...) asparagine). Residues 287–307 (ILAISLSLTSLAILVFLTISY) form a helical membrane-spanning segment. Residues 308–669 (MLFLKRKKLM…FTEPFVSHGR (362 aa)) are Cytoplasmic-facing. A Protein kinase domain is found at 344-603 (FRNSELLGKG…LGLFCSHPVA (260 aa)). ATP contacts are provided by residues 350-358 (LGKGGFGKV) and lysine 373. The Proton acceptor role is filled by aspartate 469.

This sequence in the C-terminal section; belongs to the protein kinase superfamily. Ser/Thr protein kinase family. It in the N-terminal section; belongs to the leguminous lectin family.

The protein localises to the cell membrane. The enzyme catalyses L-seryl-[protein] + ATP = O-phospho-L-seryl-[protein] + ADP + H(+). The catalysed reaction is L-threonyl-[protein] + ATP = O-phospho-L-threonyl-[protein] + ADP + H(+). The protein is L-type lectin-domain containing receptor kinase V.9 (LECRK59) of Arabidopsis thaliana (Mouse-ear cress).